Here is a 288-residue protein sequence, read N- to C-terminus: Glycine--tRNA ligase alpha subunit (288 aa).

The protein belongs to the class-II aminoacyl-tRNA synthetase family. Tetramer of two alpha and two beta subunits.

Its subcellular location is the cytoplasm. It catalyses the reaction tRNA(Gly) + glycine + ATP = glycyl-tRNA(Gly) + AMP + diphosphate. In Rickettsia peacockii (strain Rustic), this protein is Glycine--tRNA ligase alpha subunit.